The following is a 227-amino-acid chain: NAD(P)H-quinone oxidoreductase subunit K, chloroplastic (227 aa).

4 residues coordinate [4Fe-4S] cluster: C43, C44, C108, and C139.

Belongs to the complex I 20 kDa subunit family. NDH is composed of at least 16 different subunits, 5 of which are encoded in the nucleus. The cofactor is [4Fe-4S] cluster.

It localises to the plastid. It is found in the chloroplast thylakoid membrane. The catalysed reaction is a plastoquinone + NADH + (n+1) H(+)(in) = a plastoquinol + NAD(+) + n H(+)(out). It carries out the reaction a plastoquinone + NADPH + (n+1) H(+)(in) = a plastoquinol + NADP(+) + n H(+)(out). Its function is as follows. NDH shuttles electrons from NAD(P)H:plastoquinone, via FMN and iron-sulfur (Fe-S) centers, to quinones in the photosynthetic chain and possibly in a chloroplast respiratory chain. The immediate electron acceptor for the enzyme in this species is believed to be plastoquinone. Couples the redox reaction to proton translocation, and thus conserves the redox energy in a proton gradient. The sequence is that of NAD(P)H-quinone oxidoreductase subunit K, chloroplastic from Pelargonium hortorum (Common geranium).